A 336-amino-acid chain; its full sequence is Structure-specific endonuclease subunit SLX1 (336 aa).

The region spanning 21 to 104 (SFYGVYLLQS…QHCHETRHIK (84 aa)) is the GIY-YIG domain. Residues 37–57 (FYIGSTPDPPRRLRQHNGDLK) form a disordered region. The SLX1-type zinc-finger motif lies at 214 to 290 (CALCLEPIEQ…PATVNRCCSC (77 aa)).

This sequence belongs to the SLX1 family. As to quaternary structure, forms a heterodimer with SLX4. Requires a divalent metal cation as cofactor.

It is found in the nucleus. In terms of biological role, catalytic subunit of the SLX1-SLX4 structure-specific endonuclease that resolves DNA secondary structures generated during DNA repair and recombination. Has endonuclease activity towards branched DNA substrates, introducing single-strand cuts in duplex DNA close to junctions with ss-DNA. This is Structure-specific endonuclease subunit SLX1 from Scheffersomyces stipitis (strain ATCC 58785 / CBS 6054 / NBRC 10063 / NRRL Y-11545) (Yeast).